A 120-amino-acid chain; its full sequence is Transcription elongation factor SPT4 (120 aa).

The interval 1–39 (MAASIPSDLRNLRACLLCSLIKSVDAFQTDGCENCDEVL) is interaction with spt-5. A C4-type zinc finger spans residues 15 to 35 (CLLCSLIKSVDAFQTDGCENC).

The protein belongs to the SPT4 family. As to quaternary structure, interacts with spt-5 to form DSIF. DSIF interacts with RNA polymerase II and with the positive transcription elongation factor b complex (P-TEFb complex), which is composed of cdk-9 and cyclin-T.

Its subcellular location is the nucleus. Functionally, may function as a component of the DRB sensitivity-inducing factor complex (DSIF complex), which regulates transcription elongation by RNA polymerase II. DSIF may enhance transcriptional pausing at sites proximal to the promoter, which may in turn facilitate the assembly of an elongation competent RNA polymerase II complex. The polypeptide is Transcription elongation factor SPT4 (spt-4) (Caenorhabditis briggsae).